Here is a 1116-residue protein sequence, read N- to C-terminus: cGMP-specific 3',5'-cyclic phosphodiesterase (1116 aa).

Disordered regions lie at residues 1 to 36 (MTDVSATTGRAGDRVSSTSSEVAVETTSQALTNGAA) and 82 to 136 (KSEC…ATQQ). The segment covering 15 to 28 (VSSTSSEVAVETTS) has biased composition (low complexity). Over residues 86-136 (HSQSNNNQHVETAPSKQSSDSEASAPTTVSIPSANAKINSSSSGKTTATQQ) the composition is skewed to polar residues. GAF domains are found at residues 241–393 (DIDV…GIGI) and 425–611 (NLEC…GLGI). Residues 641 to 964 (SQDQTEKLAQ…RNWQDLAEKV (324 aa)) form the PDEase domain. Histidine 717 (proton donor) is an active-site residue. Histidine 721, histidine 757, aspartate 758, and aspartate 868 together coordinate a divalent metal cation. Disordered regions lie at residues 1005–1031 (QHGGSAGGGEDTHTPEHQRSSSRLSIK) and 1067–1116 (HVSE…CALL). Composition is skewed to basic and acidic residues over residues 1014–1023 (EDTHTPEHQR) and 1067–1076 (HVSEDMDDKS). A compositionally biased stretch (low complexity) spans 1085 to 1103 (SGSVGRMSASSSTSSAGTV). Positions 1106–1116 (SKKRSKLCALL) are enriched in basic residues. Cysteine 1113 bears the Cysteine methyl ester mark. Cysteine 1113 carries the S-farnesyl cysteine lipid modification. The propeptide at 1114-1116 (ALL) is removed in mature form.

Belongs to the cyclic nucleotide phosphodiesterase family. In terms of assembly, interacts with PrBP. A divalent metal cation is required as a cofactor.

It is found in the cell membrane. The enzyme catalyses 3',5'-cyclic GMP + H2O = GMP + H(+). Functionally, has a role regulating cGMP transport in Malpighian tubule principal cells. The protein is cGMP-specific 3',5'-cyclic phosphodiesterase of Drosophila mojavensis (Fruit fly).